The following is a 606-amino-acid chain: Threonine--tRNA ligase (606 aa).

The catalytic stretch occupies residues 212–503 (DHRKLGVEMK…LIEHTAGELP (292 aa)). 3 residues coordinate Zn(2+): C304, H355, and H480.

It belongs to the class-II aminoacyl-tRNA synthetase family. In terms of assembly, homodimer. The cofactor is Zn(2+).

Its subcellular location is the cytoplasm. The catalysed reaction is tRNA(Thr) + L-threonine + ATP = L-threonyl-tRNA(Thr) + AMP + diphosphate + H(+). In terms of biological role, catalyzes the attachment of threonine to tRNA(Thr) in a two-step reaction: L-threonine is first activated by ATP to form Thr-AMP and then transferred to the acceptor end of tRNA(Thr). Also edits incorrectly charged L-seryl-tRNA(Thr). In Campylobacter curvus (strain 525.92), this protein is Threonine--tRNA ligase.